Reading from the N-terminus, the 213-residue chain is Dimethylamine corrinoid protein 3 (213 aa).

The B12-binding N-terminal domain occupies 1 to 91; the sequence is MADIEGLLHE…DLPAGAEKKL (91 aa). Residues 92 to 213 form the B12-binding domain; the sequence is GVIVNGTVEG…AVAKAKELLL (122 aa). A methylcob(III)alamin-binding site is contributed by His104.

Belongs to the methylamine corrinoid protein family.

The protein operates within one-carbon metabolism; methanogenesis from dimethylamine. Acts as a methyl group carrier between MtbB and MtbA. The protein is Dimethylamine corrinoid protein 3 (mtbC3) of Methanosarcina acetivorans (strain ATCC 35395 / DSM 2834 / JCM 12185 / C2A).